The primary structure comprises 102 residues: NADH-quinone oxidoreductase subunit K (102 aa).

3 consecutive transmembrane segments (helical) span residues 6 to 26, 30 to 50, and 62 to 82; these read LEHGLIVATILFALGFYGVMV, LLFMLMSLEIMMNAAALAFVL, and VMFILILTLAAAEACIGLAIV.

The protein belongs to the complex I subunit 4L family. In terms of assembly, NDH-1 is composed of 14 different subunits. Subunits NuoA, H, J, K, L, M, N constitute the membrane sector of the complex.

The protein localises to the cell inner membrane. The catalysed reaction is a quinone + NADH + 5 H(+)(in) = a quinol + NAD(+) + 4 H(+)(out). NDH-1 shuttles electrons from NADH, via FMN and iron-sulfur (Fe-S) centers, to quinones in the respiratory chain. The immediate electron acceptor for the enzyme in this species is believed to be ubiquinone. Couples the redox reaction to proton translocation (for every two electrons transferred, four hydrogen ions are translocated across the cytoplasmic membrane), and thus conserves the redox energy in a proton gradient. The protein is NADH-quinone oxidoreductase subunit K of Acinetobacter baumannii (strain AB307-0294).